A 178-amino-acid chain; its full sequence is Caveolin-1 (178 aa).

Serine 2 is subject to N-acetylserine. The residue at position 2 (serine 2) is a Phosphoserine. The segment at 2–94 is required for homooligomerization; the sequence is SGGKYVDSEG…WKASFTTFTV (93 aa). Topologically, residues 2–104 are cytoplasmic; sequence SGGKYVDSEG…TKYWFYRLLS (103 aa). Position 5 is an N6-acetyllysine; alternate (lysine 5). Residue lysine 5 forms a Glycyl lysine isopeptide (Lys-Gly) (interchain with G-Cter in ubiquitin); alternate linkage. Residue tyrosine 6 is modified to Phosphotyrosine. Position 9 is a phosphoserine (serine 9). The residue at position 14 (tyrosine 14) is a Phosphotyrosine; by ABL1. Tyrosine 25 carries the post-translational modification Phosphotyrosine. Residues lysine 26 and lysine 30 each participate in a glycyl lysine isopeptide (Lys-Gly) (interchain with G-Cter in ubiquitin) cross-link. Serine 37 bears the Phosphoserine mark. Residues lysine 39, lysine 47, and lysine 57 each participate in a glycyl lysine isopeptide (Lys-Gly) (interchain with G-Cter in ubiquitin) cross-link. An interaction with CAVIN3 region spans residues 82 to 94; that stretch reads DGIWKASFTTFTV. The helical intramembrane region spans 105–125; sequence ALFGIPMALIWGIYFAILSFL. The Cytoplasmic portion of the chain corresponds to 126-178; that stretch reads HIWAVVPCIKSFLIEIQCISRVYSIYVHTVCDPLFEAVGKIFSNVRINLQKEI. The tract at residues 131–142 is interacts with SPRY1, SPRY2, SPRY3 and SPRY4; sequence VPCIKSFLIEIQ. 3 S-palmitoyl cysteine lipidation sites follow: cysteine 133, cysteine 143, and cysteine 156. Positions 149–160 are interacts with SPRY1, SPRY2, and SPRY4; the sequence is SIYVHTVCDPLF. The tract at residues 167–178 is interacts with SPRY1, SPRY2, SPRY3 and SPRY4; that stretch reads FSNVRINLQKEI.

This sequence belongs to the caveolin family. As to quaternary structure, homooligomer. Interacts with GLIPR2. Interacts with NOSTRIN. Interacts with SNAP25 and STX1A. Interacts (via the N-terminus) with DPP4; the interaction is direct. Interacts with CTNNB1, CDH1 and JUP. Interacts with PACSIN2; this interaction induces membrane tubulation. Interacts with SLC7A9. Interacts with BMX and BTK. Interacts with TGFBR1. Interacts with CAVIN3 (via leucine-zipper domain) in a cholesterol-sensitive manner. Interacts with CAVIN1. Interacts with EHD2 in a cholesterol-dependent manner. Forms a ternary complex with UBXN6 and VCP; mediates CAV1 targeting to lysosomes for degradation. Interacts with ABCG1; this interaction regulates ABCG1-mediated cholesterol efflux. Interacts with NEU3; this interaction enhances NEU3 sialidase activity within caveola. Interacts (via C-terminus) with SPRY1, SPRY2 (via C-terminus), SPRY3, and SPRY4. Interacts with IGFBP5; this interaction allows trafficking of IGFBP5 from the plasma membrane to the nucleus. Post-translationally, phosphorylated at Tyr-14 by ABL1 in response to oxidative stress. In terms of processing, ubiquitinated. Undergo monoubiquitination and multi- and/or polyubiquitination. Monoubiquitination of N-terminal lysines promotes integration in a ternary complex with UBXN6 and VCP which promotes oligomeric CAV1 targeting to lysosomes for degradation. Ubiquitinated by ZNRF1; leading to degradation and modulation of the TLR4-mediated immune response.

The protein resides in the golgi apparatus membrane. It is found in the cell membrane. It localises to the membrane. The protein localises to the caveola. Its subcellular location is the membrane raft. In terms of biological role, may act as a scaffolding protein within caveolar membranes. Forms a stable heterooligomeric complex with CAV2 that targets to lipid rafts and drives caveolae formation. Mediates the recruitment of CAVIN proteins (CAVIN1/2/3/4) to the caveolae. Interacts directly with G-protein alpha subunits and can functionally regulate their activity. Involved in the costimulatory signal essential for T-cell receptor (TCR)-mediated T-cell activation. Its binding to DPP4 induces T-cell proliferation and NF-kappa-B activation in a T-cell receptor/CD3-dependent manner. Recruits CTNNB1 to caveolar membranes and may regulate CTNNB1-mediated signaling through the Wnt pathway. Negatively regulates TGFB1-mediated activation of SMAD2/3 by mediating the internalization of TGFBR1 from membrane rafts leading to its subsequent degradation. Binds 20(S)-hydroxycholesterol (20(S)-OHC). This chain is Caveolin-1 (CAV1), found in Pongo abelii (Sumatran orangutan).